We begin with the raw amino-acid sequence, 355 residues long: Methionine import ATP-binding protein MetN 1 (355 aa).

Positions 6–245 constitute an ABC transporter domain; the sequence is IDLKDIAVTF…PKAPLTVDFV (240 aa). Residue 42–49 coordinates ATP; it reads GYSGAGKS.

The protein belongs to the ABC transporter superfamily. Methionine importer (TC 3.A.1.24) family. In terms of assembly, the complex is composed of two ATP-binding proteins (MetN), two transmembrane proteins (MetI) and a solute-binding protein (MetQ).

The protein localises to the cell membrane. It carries out the reaction L-methionine(out) + ATP + H2O = L-methionine(in) + ADP + phosphate + H(+). The enzyme catalyses D-methionine(out) + ATP + H2O = D-methionine(in) + ADP + phosphate + H(+). Functionally, part of the ABC transporter complex MetNIQ involved in methionine import. Responsible for energy coupling to the transport system. This chain is Methionine import ATP-binding protein MetN 1, found in Lactiplantibacillus plantarum (strain ATCC BAA-793 / NCIMB 8826 / WCFS1) (Lactobacillus plantarum).